We begin with the raw amino-acid sequence, 218 residues long: Thiopurine S-methyltransferase (218 aa).

S-adenosyl-L-methionine is bound by residues W11, L46, E67, and R122.

Belongs to the class I-like SAM-binding methyltransferase superfamily. TPMT family.

Its subcellular location is the cytoplasm. It catalyses the reaction S-adenosyl-L-methionine + a thiopurine = S-adenosyl-L-homocysteine + a thiopurine S-methylether.. The polypeptide is Thiopurine S-methyltransferase (Vibrio cholerae serotype O1 (strain ATCC 39315 / El Tor Inaba N16961)).